The primary structure comprises 202 residues: Neuroligin-3 (202 aa).

Over 1–202 (RYGSPTYFYA…TGTRMQGHSW (202 aa)) the chain is Extracellular. A disulfide bridge links Cys-15 with Cys-49. A glycan (N-linked (GlcNAc...) asparagine) is linked at Asn-50. The tract at residues 154–202 (LRIPPTAPTSPAGPMARPGAPSGQPSHLPTATRMPRGPGTGTRMQGHSW) is disordered.

The protein belongs to the type-B carboxylesterase/lipase family. Homodimer, and heterodimer with NLGN1 and NLGN2. Interacts with neurexins NRXN1, NRXN2 and NRXN3. Interaction with neurexins is mediated by heparan sulfate glycan modification on neurexin. Interacts (via its C-terminus) with DLG4/PSD-95 (via PDZ domain 3).

The protein localises to the cell membrane. Its subcellular location is the synapse. Cell surface protein involved in cell-cell-interactions via its interactions with neurexin family members. Plays a role in synapse function and synaptic signal transmission, and probably mediates its effects by recruiting and clustering other synaptic proteins. May promote the initial formation of synapses, but is not essential for this. May also play a role in glia-glia or glia-neuron interactions in the developing peripheral nervous system. The polypeptide is Neuroligin-3 (NLGN3) (Macaca mulatta (Rhesus macaque)).